The sequence spans 382 residues: Two-component response regulator ARR14 (382 aa).

Residues 12-128 (RILVVDDDTS…ELKNIWQHVV (117 aa)) form the Response regulatory domain. D63 is modified (4-aspartylphosphate). Positions 171–181 (CRNKKKKKKRS) are enriched in basic residues. The tract at residues 171 to 193 (CRNKKKKKKRSVDRDDNEDDLLL) is disordered. Residues 199–202 (KKSR) carry the Nuclear localization signal motif. Residues 202–252 (RVVWSIELHQQFVNAVNKLGIDKAVPKRILELMNVPGLSRENVASHLQKFR) constitute a DNA-binding region (myb-like GARP).

The protein belongs to the ARR family. Type-B subfamily. In terms of assembly, binds the target DNA as a monomer. In terms of processing, two-component system major event consists of a His-to-Asp phosphorelay between a sensor histidine kinase (HK) and a response regulator (RR). In plants, the His-to-Asp phosphorelay involves an additional intermediate named Histidine-containing phosphotransfer protein (HPt). This multistep phosphorelay consists of a His-Asp-His-Asp sequential transfer of a phosphate group between first a His and an Asp of the HK protein, followed by the transfer to a conserved His of the HPt protein and finally the transfer to an Asp in the receiver domain of the RR protein. As to expression, predominantly expressed in young leaf tissue.

Its subcellular location is the nucleus. In terms of biological role, transcriptional activator that binds specifically to the DNA sequence 5'-[AG]GATT-3'. Functions as a response regulator involved in His-to-Asp phosphorelay signal transduction system. Phosphorylation of the Asp residue in the receiver domain activates the ability of the protein to promote the transcription of target genes. Could directly activate some type-A response regulators in response to cytokinins. The protein is Two-component response regulator ARR14 (ARR14) of Arabidopsis thaliana (Mouse-ear cress).